Reading from the N-terminus, the 339-residue chain is Ketol-acid reductoisomerase (NADP(+)) (339 aa).

A KARI N-terminal Rossmann domain is found at 1-182; sequence MRVYYDRDAD…GGGRSGIIET (182 aa). Residues 24-27, Lys-48, Ser-51, Thr-53, and 83-86 each bind NADP(+); these read YGSQ and DELQ. His-108 is a catalytic residue. Residue Gly-134 participates in NADP(+) binding. A KARI C-terminal knotted domain is found at 183 to 328; it reads NFREECETDL…AKLRAMMPWI (146 aa). The Mg(2+) site is built by Asp-191, Glu-195, Glu-227, and Glu-231. Ser-252 contacts substrate.

The protein belongs to the ketol-acid reductoisomerase family. Requires Mg(2+) as cofactor.

It catalyses the reaction (2R)-2,3-dihydroxy-3-methylbutanoate + NADP(+) = (2S)-2-acetolactate + NADPH + H(+). The enzyme catalyses (2R,3R)-2,3-dihydroxy-3-methylpentanoate + NADP(+) = (S)-2-ethyl-2-hydroxy-3-oxobutanoate + NADPH + H(+). The protein operates within amino-acid biosynthesis; L-isoleucine biosynthesis; L-isoleucine from 2-oxobutanoate: step 2/4. It functions in the pathway amino-acid biosynthesis; L-valine biosynthesis; L-valine from pyruvate: step 2/4. Functionally, involved in the biosynthesis of branched-chain amino acids (BCAA). Catalyzes an alkyl-migration followed by a ketol-acid reduction of (S)-2-acetolactate (S2AL) to yield (R)-2,3-dihydroxy-isovalerate. In the isomerase reaction, S2AL is rearranged via a Mg-dependent methyl migration to produce 3-hydroxy-3-methyl-2-ketobutyrate (HMKB). In the reductase reaction, this 2-ketoacid undergoes a metal-dependent reduction by NADPH to yield (R)-2,3-dihydroxy-isovalerate. The protein is Ketol-acid reductoisomerase (NADP(+)) of Mesorhizobium japonicum (strain LMG 29417 / CECT 9101 / MAFF 303099) (Mesorhizobium loti (strain MAFF 303099)).